Here is a 176-residue protein sequence, read N- to C-terminus: Xanthine-guanine phosphoribosyltransferase (176 aa).

5-phospho-alpha-D-ribose 1-diphosphate contacts are provided by residues 51–52 (RG), Arg88, and 111–119 (DDLVDSGKT). Residue Arg88 participates in GMP binding. Asp112 serves as a coordination point for Mg(2+). Guanine contacts are provided by Asp115 and Ile158. 2 residues coordinate xanthine: Asp115 and Ile158. GMP-binding positions include 115–119 (DSGKT) and 157–158 (WI).

The protein belongs to the purine/pyrimidine phosphoribosyltransferase family. XGPT subfamily. Homotetramer. Requires Mg(2+) as cofactor.

The protein resides in the cell inner membrane. The enzyme catalyses GMP + diphosphate = guanine + 5-phospho-alpha-D-ribose 1-diphosphate. The catalysed reaction is XMP + diphosphate = xanthine + 5-phospho-alpha-D-ribose 1-diphosphate. It carries out the reaction IMP + diphosphate = hypoxanthine + 5-phospho-alpha-D-ribose 1-diphosphate. The protein operates within purine metabolism; GMP biosynthesis via salvage pathway; GMP from guanine: step 1/1. It participates in purine metabolism; XMP biosynthesis via salvage pathway; XMP from xanthine: step 1/1. Its function is as follows. Purine salvage pathway enzyme that catalyzes the transfer of the ribosyl-5-phosphate group from 5-phospho-alpha-D-ribose 1-diphosphate (PRPP) to the N9 position of the 6-oxopurines guanine and xanthine to form the corresponding ribonucleotides GMP (guanosine 5'-monophosphate) and XMP (xanthosine 5'-monophosphate), with the release of PPi. To a lesser extent, also acts on hypoxanthine. The polypeptide is Xanthine-guanine phosphoribosyltransferase (Roseobacter denitrificans (strain ATCC 33942 / OCh 114) (Erythrobacter sp. (strain OCh 114))).